The sequence spans 132 residues: Agouti-signaling protein (132 aa).

An N-terminal signal peptide occupies residues 1–22; that stretch reads MDVTRLLLATLLVFLCFFTAYS. The N-linked (GlcNAc...) asparagine glycan is linked to asparagine 39. Residues 61 to 87 form a disordered region; the sequence is QISRKEAEKKRSSKKEASMKKVARPRT. Over residues 63–79 the composition is skewed to basic and acidic residues; sequence SRKEAEKKRSSKKEASM. 5 disulfides stabilise this stretch: cysteine 93–cysteine 108, cysteine 100–cysteine 114, cysteine 107–cysteine 125, cysteine 111–cysteine 132, and cysteine 116–cysteine 123. The Agouti domain occupies 93-132; the sequence is CVTTRDSCKPPAPACCDPCASCQCRFFRSACSCRVLSLNC.

Its subcellular location is the secreted. Its function is as follows. Involved in the regulation of melanogenesis. The binding of ASP to MC1R precludes alpha-MSH initiated signaling and thus blocks production of cAMP, leading to a down-regulation of eumelanogenesis (brown/black pigment) and thus increasing synthesis of pheomelanin (yellow/red pigment). This is Agouti-signaling protein (ASIP) from Macaca silenus (Lion-tailed macaque).